A 199-amino-acid polypeptide reads, in one-letter code: MARCKS-related protein (199 aa).

The interval 1-199 (MGSQSSKAPR…GPASASAENE (199 aa)) is disordered. The N-myristoyl glycine moiety is linked to residue G2. T14 bears the Phosphothreonine mark. The span at 16–26 (EEAAGASPAKA) shows a compositional bias: low complexity. S22, S36, and S48 each carry phosphoserine. Over residues 53-64 (GADEAAGATGDA) the composition is skewed to low complexity. S71 bears the Phosphoserine mark. A compositionally biased stretch (basic and acidic residues) spans 74–85 (AEAKGEVAPKET). T85 is subject to Phosphothreonine. A compositionally biased stretch (basic residues) spans 86–98 (PKKKKKFSFKKPF). The effector domain involved in lipid-binding and calmodulin-binding stretch occupies residues 87-110 (KKKKKFSFKKPFKLSGLSFKRNRK). A phosphoserine; by PKC mark is found at S93, S101, and S104. S119 carries the phosphoserine modification. At S120 the chain carries Phosphoserine; by MAPK8. 2 positions are modified to phosphoserine: S132 and S135. Residue T148 is modified to Phosphothreonine; by MAPK8. Phosphoserine occurs at positions 151, 162, and 165. Positions 175–199 (GPQAAEPSTPSGPESGPASASAENE) are enriched in low complexity. T183 carries the phosphothreonine; by MAPK8 modification.

The protein belongs to the MARCKS family. As to quaternary structure, binds to filamentous actin (F-actin), but not to monomeric G-actin, independently of its phosphorylation status. Interacts with calmodulin. Post-translationally, phosphorylated. Phosphorylation at Ser-120 and Thr-183 is non-redundantly catalyzed by MAPK8 in vivo. Phosphorylation at Thr-148 is preferentially catalyzed by MAPK8 in vivo, but this modification can also be catalyzed by other kinases in the absence of MAPK8. May be phosphorylated by protein kinase C, which disrupts the interaction with calmodulin.

It is found in the cytoplasm. Its subcellular location is the cytoskeleton. The protein resides in the cell membrane. Controls cell movement by regulating actin cytoskeleton homeostasis and filopodium and lamellipodium formation. When unphosphorylated, induces cell migration. When phosphorylated by MAPK8, induces actin bundles formation and stabilization, thereby reducing actin plasticity, hence restricting cell movement, including neuronal migration. May be involved in coupling the protein kinase C and calmodulin signal transduction systems. This chain is MARCKS-related protein (Marcksl1), found in Rattus norvegicus (Rat).